Consider the following 618-residue polypeptide: 1-aminocyclopropane-1-carboxylate synthase-like protein 1 (618 aa).

Over residues 11 to 26 (QGTQTPAAQTTCAPST) the composition is skewed to low complexity. Positions 11-54 (QGTQTPAAQTTCAPSTMSSSSRPPLETLQAQSVSADETPGSALP) are disordered. Over residues 27-45 (MSSSSRPPLETLQAQSVSA) the composition is skewed to polar residues. Position 122 (Glu122) interacts with substrate. N6-(pyridoxal phosphate)lysine is present on Lys340.

This sequence belongs to the class-I pyridoxal-phosphate-dependent aminotransferase family.

The sequence is that of 1-aminocyclopropane-1-carboxylate synthase-like protein 1 (accs) from Takifugu rubripes (Japanese pufferfish).